The sequence spans 397 residues: Elongation factor Tu (397 aa).

The 197-residue stretch at Lys-10–Glu-206 folds into the tr-type G domain. A G1 region spans residues Gly-19–Thr-26. Residue Gly-19–Thr-26 participates in GTP binding. Thr-26 contacts Mg(2+). Residues Gly-60–Asn-64 are G2. Residues Asp-81–Gly-84 are G3. GTP-binding positions include Asp-81–His-85 and Asn-136–Asp-139. The segment at Asn-136–Asp-139 is G4. The G5 stretch occupies residues Ser-174–Leu-176.

This sequence belongs to the TRAFAC class translation factor GTPase superfamily. Classic translation factor GTPase family. EF-Tu/EF-1A subfamily. In terms of assembly, monomer.

Its subcellular location is the cytoplasm. It carries out the reaction GTP + H2O = GDP + phosphate + H(+). Its function is as follows. GTP hydrolase that promotes the GTP-dependent binding of aminoacyl-tRNA to the A-site of ribosomes during protein biosynthesis. This chain is Elongation factor Tu, found in Clostridium botulinum (strain Loch Maree / Type A3).